A 1610-amino-acid polypeptide reads, in one-letter code: MMMMMMKKMQHQRQQQEDHANEANYARGTRPPISGEGPTSQPNSSKQTVLSWQAAIDAARQAKAAQTMSTSAPPPVGSLSQRKRQQYAKSKKQGNSSNSRPARALFCLSLNNPIRRACISIVEWKPFDIFILLAIFANCVALAIYIPFPEDDSNSTNHNLEKVEYAFLIIFTVETFLKIIAYGLLLHPNAYVRNGWNLLDFVIVIVGLFSVILEQLTKETEGGNHSSGKSGGFDVKALRAFRVLRPLRLVSGVPSLQVVLNSIIKAMVPLLHIALLVLFVIIIYAIIGLELFIGKMHKTCFFADSDIVAEEDPAPCAFSGNGRQCAVNGTECRSGWVGPNGGITNFDNFAFAMLTVFQCITMEGWTDVLYWMNDAMGFELPWVYFVSLVIFGSFFVLNLVLGVLSGEFSKEREKAKARGDFQKLRENEQLEEDLKGYLDWITQAEDIDPENEEEGGEEGKRNTSMPTSETESVNTENVSGEGETQGSCGSLCQAISKSKLSRRWRRWNRFNRRRCRAAVKSVTFYWLVIVLVFLNTLTISSEHYNQPDWLTQIQDIANKVLLALFTCEMLVKMYSLGLQAYFVSLFNRFDCFVVCGGITETILVELELMSPLGVSVFRCVRLLRIFKVTRHWTSLSNLVASLLNSMKSIASLLLLLFLFIIIFSLLGMQLFGGKFNFDETQTKRSTFDNFPQALLTVFQILTGEDWNAVMYDGIMAYGGPSSSGMIVCIYFIILFICGNYILLNVFLAIAVDNLADAESLNTAQKEEAEEKERKKIARKESLENKKNNKPEVNQIANSDNKVTIDDYQEETEDKDPYPPCDVPVGEEEEEEEEEPEVPAGPRPRRISELNMKEKIVPIPEGSAFFILSKTNPIRVGCHKLINHHIFTNLILVFIMLSSAALAAEDPIRSHSFRNTILGYFDYAFTAIFTVEILLKMTTFGAFLHKGAFCRNYFNLLDMLVVGVSLVSFGIQSSAISVVKILRVLRVLRPLRAINRAKGLKHVVQCVFVAIRTIGNIMIVTTLLQFMFACIGVQLFKGKFYRCTDEAKSNPEECRGLFILYKDGDVDSPVVRERIWQNSDFNFDNVLSAMMALFTVSTFEGWPALLYKAIDSNGENAGPVYNHRVEISIFFIIYIIIVAFFMMNIFVGFVIVTFQEQGEKEYKNCELDKNQRQCVEYALKARPLRRYIPKNPYQYKFWYVVNSSPFEYMMFVLIMLNTLCLAMQHYEQSKMFNDAMDILNMVFTGVFTVEMVLKVIAFKPKGYFSDAWNTFDSLIVIGSIIDVALSEADPTESESLPLPTATPGNSEESNRISITFFRLFRVMRLVKLLSRGEGIRTLLWTFIKSFQALPYVALLIAMLFFIYAVIGMQMFGKVAMRDNNQINRNNNFQTFPQAVLLLFRCATGEAWQEIMLACLPGKLCDPDSDYNPGEEYTCGSNFAIVYFISFYMLCAFLIINLFVAVIMDNFDYLTRDWSILGPHHLDEFKRIWSEYDPEAKGRIKHLDVVTLLRRIQPPLGFGKLCPHRVACKRLVAMNMPLNSDGTVMFNATLFALVRTALKIKTEGNLEQANEELRAVIKKIWKKTSMKLLDQVVPPAGGQCGLCFLSPSRSRS.

The tract at residues 1-99 (MMMMMMKKMQ…SKKQGNSSNS (99 aa)) is disordered. The Cytoplasmic segment spans residues 1–125 (MMMMMMKKMQ…RACISIVEWK (125 aa)). Positions 37–51 (GPTSQPNSSKQTVLS) are enriched in polar residues. The span at 53-66 (QAAIDAARQAKAAQ) shows a compositional bias: low complexity. A compositionally biased stretch (basic residues) spans 81 to 92 (QRKRQQYAKSKK). An I repeat occupies 112 to 408 (NPIRRACISI…LVLGVLSGEF (297 aa)). The chain crosses the membrane as a helical span at residues 126–144 (PFDIFILLAIFANCVALAI). Topologically, residues 145-162 (YIPFPEDDSNSTNHNLEK) are extracellular. A glycan (N-linked (GlcNAc...) asparagine) is linked at Asn154. Residues 163-182 (VEYAFLIIFTVETFLKIIAY) traverse the membrane as a helical segment. The Cytoplasmic segment spans residues 183–194 (GLLLHPNAYVRN). The chain crosses the membrane as a helical span at residues 195–213 (GWNLLDFVIVIVGLFSVIL). The Extracellular segment spans residues 214–234 (EQLTKETEGGNHSSGKSGGFD). An N-linked (GlcNAc...) asparagine glycan is attached at Asn224. Residues 235–253 (VKALRAFRVLRPLRLVSGV) form a helical membrane-spanning segment. Over 254–272 (PSLQVVLNSIIKAMVPLLH) the chain is Cytoplasmic. Residues 273–292 (IALLVLFVIIIYAIIGLELF) traverse the membrane as a helical segment. At 293 to 380 (IGKMHKTCFF…WMNDAMGFEL (88 aa)) the chain is on the extracellular side. The N-linked (GlcNAc...) asparagine glycan is linked to Asn328. Glu363 is a Ca(2+) binding site. Residues 381-405 (PWVYFVSLVIFGSFFVLNLVLGVLS) form a helical membrane-spanning segment. At 406-522 (GEFSKEREKA…RRCRAAVKSV (117 aa)) the chain is on the cytoplasmic side. Residues 428–445 (EQLEEDLKGYLDWITQAE) form a binding to the beta subunit region. The interval 448-487 (DPENEEEGGEEGKRNTSMPTSETESVNTENVSGEGETQGS) is disordered. Over residues 462 to 487 (NTSMPTSETESVNTENVSGEGETQGS) the composition is skewed to polar residues. Residues 508–754 (NRFNRRRCRA…VFLAIAVDNL (247 aa)) form an II repeat. A helical transmembrane segment spans residues 523-542 (TFYWLVIVLVFLNTLTISSE). Residues 543–557 (HYNQPDWLTQIQDIA) lie on the Extracellular side of the membrane. Residues 558 to 576 (NKVLLALFTCEMLVKMYSL) traverse the membrane as a helical segment. Topologically, residues 577–584 (GLQAYFVS) are cytoplasmic. A helical membrane pass occupies residues 585–603 (LFNRFDCFVVCGGITETIL). Residues 604 to 613 (VELELMSPLG) are Extracellular-facing. The chain crosses the membrane as a helical span at residues 614–632 (VSVFRCVRLLRIFKVTRHW). Residues 633-651 (TSLSNLVASLLNSMKSIAS) are Cytoplasmic-facing. Residues 652–672 (LLLLLFLFIIIFSLLGMQLFG) traverse the membrane as a helical segment. The Extracellular portion of the chain corresponds to 673–726 (GKFNFDETQTKRSTFDNFPQALLTVFQILTGEDWNAVMYDGIMAYGGPSSSGMI). Glu704 is a Ca(2+) binding site. Residues 727–751 (VCIYFIILFICGNYILLNVFLAIAV) traverse the membrane as a helical segment. The Cytoplasmic segment spans residues 752–884 (DNLADAESLN…VGCHKLINHH (133 aa)). Over residues 765 to 789 (KEEAEEKERKKIARKESLENKKNNK) the composition is skewed to basic and acidic residues. Positions 765-846 (KEEAEEKERK…VPAGPRPRRI (82 aa)) are disordered. Over residues 790-801 (PEVNQIANSDNK) the composition is skewed to polar residues. Residues 824-836 (VGEEEEEEEEEPE) are compositionally biased toward acidic residues. Residues 871–1153 (NPIRVGCHKL…IFVGFVIVTF (283 aa)) form an III repeat. A helical membrane pass occupies residues 885–903 (IFTNLILVFIMLSSAALAA). Residues 904 to 919 (EDPIRSHSFRNTILGY) are Extracellular-facing. The chain crosses the membrane as a helical span at residues 920–939 (FDYAFTAIFTVEILLKMTTF). At 940 to 951 (GAFLHKGAFCRN) the chain is on the cytoplasmic side. The helical transmembrane segment at 952–970 (YFNLLDMLVVGVSLVSFGI) threads the bilayer. Residues 971-976 (QSSAIS) lie on the Extracellular side of the membrane. The helical transmembrane segment at 977 to 996 (VVKILRVLRVLRPLRAINRA) threads the bilayer. Over 997–1015 (KGLKHVVQCVFVAIRTIGN) the chain is Cytoplasmic. The chain crosses the membrane as a helical span at residues 1016-1035 (IMIVTTLLQFMFACIGVQLF). At 1036-1125 (KGKFYRCTDE…AGPVYNHRVE (90 aa)) the chain is on the extracellular side. The dihydropyridine binding stretch occupies residues 1073 to 1163 (RIWQNSDFNF…QEQGEKEYKN (91 aa)). Glu1099 provides a ligand contact to Ca(2+). Residues 1126–1146 (ISIFFIIYIIIVAFFMMNIFV) traverse the membrane as a helical segment. Over 1147 to 1203 (GFVIVTFQEQGEKEYKNCELDKNQRQCVEYALKARPLRRYIPKNPYQYKFWYVVNSS) the chain is Cytoplasmic. An IV repeat occupies 1190–1465 (NPYQYKFWYV…LFVAVIMDNF (276 aa)). A helical membrane pass occupies residues 1204 to 1222 (PFEYMMFVLIMLNTLCLAM). Residues 1223 to 1237 (QHYEQSKMFNDAMDI) lie on the Extracellular side of the membrane. The chain crosses the membrane as a helical span at residues 1238–1257 (LNMVFTGVFTVEMVLKVIAF). Residues 1258–1264 (KPKGYFS) are Cytoplasmic-facing. Residues 1265-1286 (DAWNTFDSLIVIGSIIDVALSE) traverse the membrane as a helical segment. At 1287–1311 (ADPTESESLPLPTATPGNSEESNRI) the chain is on the extracellular side. The chain crosses the membrane as a helical span at residues 1312-1331 (SITFFRLFRVMRLVKLLSRG). Topologically, residues 1332 to 1350 (EGIRTLLWTFIKSFQALPY) are cytoplasmic. Residues 1351–1370 (VALLIAMLFFIYAVIGMQMF) form a helical membrane-spanning segment. Over 1371-1437 (GKVAMRDNNQ…GEEYTCGSNF (67 aa)) the chain is Extracellular. The interval 1418–1484 (LCDPDSDYNP…LGPHHLDEFK (67 aa)) is dihydropyridine binding. The phenylalkylamine binding stretch occupies residues 1430-1473 (EYTCGSNFAIVYFISFYMLCAFLIINLFVAVIMDNFDYLTRDWS). Residues 1438–1462 (AIVYFISFYMLCAFLIINLFVAVIM) traverse the membrane as a helical segment. The Cytoplasmic segment spans residues 1463–1610 (DNFDYLTRDW…CFLSPSRSRS (148 aa)).

It belongs to the calcium channel alpha-1 subunit (TC 1.A.1.11) family. CACNA1D subfamily. As to quaternary structure, voltage-dependent calcium channels are multisubunit complexes, consisting of alpha-1, alpha-2, beta and delta subunits in a 1:1:1:1 ratio. The channel activity is directed by the pore-forming and voltage-sensitive alpha-1 subunit. In many cases, this subunit is sufficient to generate voltage-sensitive calcium channel activity. The auxiliary subunits beta and alpha-2/delta linked by a disulfide bridge regulate the channel activity. Interacts with RIMBP2. Interacts with CABP1 and CABP4, resulting in a near elimination of calcium-dependent inactivation of the channel. In terms of tissue distribution, expressed in brain, heart and skeletal muscle.

The protein localises to the membrane. The catalysed reaction is Ca(2+)(in) = Ca(2+)(out). Functionally, voltage-sensitive calcium channels (VSCC) mediate the entry of calcium ions into excitable cells and are also involved in a variety of calcium-dependent processes, including muscle contraction, hormone or neurotransmitter release, gene expression, cell motility, cell division and cell death. The isoform alpha-1D gives rise to L-type calcium currents. Long-lasting (L-type) calcium channels belong to the 'high-voltage activated' (HVA) group. They are blocked by dihydropyridines (DHP), phenylalkylamines, and by benzothiazepines. The sequence is that of Voltage-dependent L-type calcium channel subunit alpha-1D (CACNA1D) from Mesocricetus auratus (Golden hamster).